The primary structure comprises 190 residues: Probable RNA-binding protein 18 (190 aa).

Residues 25–106 (HRLWIGNVDP…KKLVVRWAHA (82 aa)) enclose the RRM domain.

This is Probable RNA-binding protein 18 (rbm18) from Xenopus laevis (African clawed frog).